Consider the following 240-residue polypeptide: MADS-box protein SVP (240 aa).

Residues 3–57 (REKIQIRKIDNATARQVTFSKRRRGLFKKAEELSVLCDADVALIIFSSTGKLFEF) enclose the MADS-box domain. Residues 87–180 (QLVENSDHAR…GTQLTEENER (94 aa)) enclose the K-box domain. The disordered stretch occupies residues 202-240 (VYEEGQSSESITNAGNSTGAPVDSESSDTSLRLGLPYGG). The segment covering 206–220 (GQSSESITNAGNSTG) has biased composition (polar residues).

In terms of assembly, forms a heterodimer with AP1 and SVP. Interacts with the SEU-LUG corepressor complex when complexed to AP1. Interacts with AGL15. Interacts with AGL16. In terms of tissue distribution, detected in roots and leaves. Expressed at very low levels in flowers and siliques. Present in floral meristems.

It localises to the nucleus. In terms of biological role, transcription repressor that inhibit floral transition in the autonomous flowering pathway, independent of photoperiod and temperature. Acts in a dosage-dependent manner. Together with AGL24 and AP1, controls the identity of the floral meristem and regulates expression of class B, C and E genes. Promotes EFM expression to suppress flowering. The chain is MADS-box protein SVP from Arabidopsis thaliana (Mouse-ear cress).